Here is a 407-residue protein sequence, read N- to C-terminus: Tryptophan synthase beta chain (407 aa).

K91 is subject to N6-(pyridoxal phosphate)lysine.

This sequence belongs to the TrpB family. In terms of assembly, tetramer of two alpha and two beta chains. Pyridoxal 5'-phosphate is required as a cofactor.

The enzyme catalyses (1S,2R)-1-C-(indol-3-yl)glycerol 3-phosphate + L-serine = D-glyceraldehyde 3-phosphate + L-tryptophan + H2O. It functions in the pathway amino-acid biosynthesis; L-tryptophan biosynthesis; L-tryptophan from chorismate: step 5/5. The beta subunit is responsible for the synthesis of L-tryptophan from indole and L-serine. The polypeptide is Tryptophan synthase beta chain (Streptococcus pneumoniae serotype 2 (strain D39 / NCTC 7466)).